A 1216-amino-acid polypeptide reads, in one-letter code: DNA-directed RNA polymerase subunit beta' (1216 aa).

Residues Cys60, Cys62, Cys75, and Cys78 each contribute to the Zn(2+) site. The Mg(2+) site is built by Asp450, Asp452, and Asp454. Zn(2+)-binding residues include Cys819, Cys893, Cys900, and Cys903.

Belongs to the RNA polymerase beta' chain family. In terms of assembly, the RNAP catalytic core consists of 2 alpha, 1 beta, 1 beta' and 1 omega subunit. When a sigma factor is associated with the core the holoenzyme is formed, which can initiate transcription. Mg(2+) serves as cofactor. It depends on Zn(2+) as a cofactor.

It catalyses the reaction RNA(n) + a ribonucleoside 5'-triphosphate = RNA(n+1) + diphosphate. DNA-dependent RNA polymerase catalyzes the transcription of DNA into RNA using the four ribonucleoside triphosphates as substrates. This is DNA-directed RNA polymerase subunit beta' from Streptococcus agalactiae serotype Ia (strain ATCC 27591 / A909 / CDC SS700).